Consider the following 250-residue polypeptide: MRSRWQTLRKWIVKAVLLFFVSSLGFVLLYRFVPVPLTPLMVIRSVSSVWGEEFVGIHKDWVPLEEIAPSVQKAVLKAEDYRFFEHNGFDFDAIEKAMKYNKTHKRKKGASTITQQTAKNVFLWPQRDWVRKGLEAYFTILIESTWPKERIMEVYLNVIELGPGVYGVEAASQKYFKRSAKNLNPYQASLIAAVLPNPRRFRIDRPSNYVVGRQRRILNRVAPAIPKAADASLLDFLDLKFDSEEDESAN.

The helical transmembrane segment at 15–35 threads the bilayer; the sequence is AVLLFFVSSLGFVLLYRFVPV.

It belongs to the glycosyltransferase 51 family.

It localises to the cell inner membrane. It catalyses the reaction [GlcNAc-(1-&gt;4)-Mur2Ac(oyl-L-Ala-gamma-D-Glu-L-Lys-D-Ala-D-Ala)](n)-di-trans,octa-cis-undecaprenyl diphosphate + beta-D-GlcNAc-(1-&gt;4)-Mur2Ac(oyl-L-Ala-gamma-D-Glu-L-Lys-D-Ala-D-Ala)-di-trans,octa-cis-undecaprenyl diphosphate = [GlcNAc-(1-&gt;4)-Mur2Ac(oyl-L-Ala-gamma-D-Glu-L-Lys-D-Ala-D-Ala)](n+1)-di-trans,octa-cis-undecaprenyl diphosphate + di-trans,octa-cis-undecaprenyl diphosphate + H(+). It participates in cell wall biogenesis; peptidoglycan biosynthesis. Functionally, peptidoglycan polymerase that catalyzes glycan chain elongation from lipid-linked precursors. This Bdellovibrio bacteriovorus (strain ATCC 15356 / DSM 50701 / NCIMB 9529 / HD100) protein is Biosynthetic peptidoglycan transglycosylase.